Consider the following 294-residue polypeptide: Undecaprenyl-diphosphatase (294 aa).

Helical transmembrane passes span 39-59 (PGAA…ILYF), 93-113 (ATLG…GFTL), 123-143 (NLWI…MVDA), 198-218 (SFLM…IKAV), 232-252 (PTLV…IGFL), and 268-288 (IGLA…AIDP).

The protein belongs to the UppP family.

It is found in the cell membrane. The enzyme catalyses di-trans,octa-cis-undecaprenyl diphosphate + H2O = di-trans,octa-cis-undecaprenyl phosphate + phosphate + H(+). Its function is as follows. Catalyzes the dephosphorylation of undecaprenyl diphosphate (UPP). Confers resistance to bacitracin. The protein is Undecaprenyl-diphosphatase of Bifidobacterium longum (strain DJO10A).